The following is a 474-amino-acid chain: JmjC domain-containing protein F (474 aa).

A disordered region spans residues 247 to 269 (KTKKQQQQQQTTTTTANNDNDNS). Residues 251–261 (QQQQQQTTTTT) are compositionally biased toward low complexity. The JmjC domain occupies 305–474 (AYLAQHGLIE…LSLSFWFIKK (170 aa)).

The polypeptide is JmjC domain-containing protein F (jcdF) (Dictyostelium discoideum (Social amoeba)).